Here is a 518-residue protein sequence, read N- to C-terminus: Glycerophosphoinositol transporter 1 (518 aa).

Over 1-44 (MEDKDITSVNEKEVNENTNPRIIKYDAERRATRTETSKKDKWKN) the chain is Cytoplasmic. A helical membrane pass occupies residues 45-65 (IVTIIASGFALISDGYVNGSM). At 66–91 (SMLNKVFVMEYGKKNYSSKVSTRVSN) the chain is on the extracellular side. N-linked (GlcNAc...) asparagine glycosylation is present at N80. A helical membrane pass occupies residues 92–112 (AALVGIIFGQFFMGIAADYYS). Topologically, residues 113-114 (RK) are cytoplasmic. A helical membrane pass occupies residues 115 to 136 (SCILVATAILVIGSALCAASHG). The Extracellular segment spans residues 137–138 (TT). A helical membrane pass occupies residues 139–159 (VPGMFWMLTVMRGLVGIGVGA). Over 160-184 (EYPTSTLSANESANEYTTTKRGGIL) the chain is Cytoplasmic. Residues 185–205 (VMVTNLPLAFGGPFATIIFLI) form a helical membrane-spanning segment. The Extracellular portion of the chain corresponds to 206-216 (VYKICSGTKHL). The helical transmembrane segment at 217 to 237 (EAIWRTVFAIGCFWPLSVFYF) threads the bilayer. Residues 238–268 (RWKTATTEVYEKGRIKRNIPYFLALKFYWKR) lie on the Cytoplasmic side of the membrane. Residues 269 to 289 (LLGTCGTWFMYDFVTFPNGIF) form a helical membrane-spanning segment. At 290 to 306 (SSTIISSVIKDQNDLVK) the chain is on the extracellular side. The helical transmembrane segment at 307–327 (VAEWNLLLGVLAVLGVPIGAY) threads the bilayer. Topologically, residues 328–335 (LSDRIGRK) are cytoplasmic. A helical membrane pass occupies residues 336-356 (YTLMFGFSGYIIFGLIIGCAY). Residues 357–360 (DQLK) lie on the Extracellular side of the membrane. A helical transmembrane segment spans residues 361-381 (KITPLFIIFYAFMNMLGNAGP). Over 382 to 399 (GDMLGVISSEASATAVRG) the chain is Cytoplasmic. The chain crosses the membrane as a helical span at residues 400-420 (VFYGLSAVTGKIGSVVGVECF). Residues 421–430 (QPIRDNLGAR) lie on the Extracellular side of the membrane. Residues 431–451 (WTFIIAAICGLIGIIITYFFV) traverse the membrane as a helical segment. Residues 452 to 518 (PHSLESDLMK…IISVRQVDQS (67 aa)) lie on the Cytoplasmic side of the membrane.

Belongs to the major facilitator superfamily. Sugar transporter (TC 2.A.1.1) family.

It localises to the cell membrane. The enzyme catalyses sn-glycerol 3-phosphocholine(out) = sn-glycerol 3-phosphocholine(in). It carries out the reaction sn-glycero-3-phospho-1D-myo-inositol(out) = sn-glycero-3-phospho-1D-myo-inositol(in). In terms of biological role, glycerophosphodiester transporter that mediates uptake of both glycerophosphoinositol (GroPIns) and glycerophosphocholine (GroPCho) as sources of the nutrients inositol and phosphate. The protein is Glycerophosphoinositol transporter 1 of Saccharomyces cerevisiae (strain ATCC 204508 / S288c) (Baker's yeast).